The chain runs to 200 residues: Claudin-11 (200 aa).

Residue methionine 1 is a topological domain, cytoplasmic. A helical transmembrane segment spans residues 2 to 22 (VATCLQVVGFVTSFVGWIGVI). At 23–75 (VTTSTNDWVVTCGYTIPTCRKLDELGSKGLWADCVMATGLYHCKPLVDILPCR) the chain is on the extracellular side. A helical membrane pass occupies residues 76 to 96 (ALMIAASVLGLPAILLLLTVL). Residues 97 to 115 (PCIRMGQEPGVAKYRRAQL) lie on the Cytoplasmic side of the membrane. Residues 116-136 (AGVLLILLALCAIVATIWFPV) traverse the membrane as a helical segment. Residues 137–150 (CAHRETTIVSFGYS) are Extracellular-facing. Residues 151–171 (LYAGWIGAVLCLVGGCVILCC) form a helical membrane-spanning segment. Over 172 to 200 (AGDAQAFGENRFYYTAGSSSPTHAKSAHV) the chain is Cytoplasmic. Residues serine 190 and serine 191 each carry the phosphoserine modification.

This sequence belongs to the claudin family. In terms of assembly, interacts with tetraspanin-3/TSPAN3. Interacts with OCLN.

The protein resides in the cell junction. It localises to the tight junction. It is found in the cell membrane. Plays a major role in tight junction-specific obliteration of the intercellular space, through calcium-independent cell-adhesion activity. The chain is Claudin-11 (CLDN11) from Pongo abelii (Sumatran orangutan).